Here is a 633-residue protein sequence, read N- to C-terminus: Probable potassium transport system protein Kup (633 aa).

The next 12 helical transmembrane spans lie at 21–41 (LAVGSVGVVYGDIGTSPLYAF), 61–81 (LVSLMFWALTIIVTMKYVLFL), 107–127 (TAVLMLLGLLGAALFLGDAMI), 145–165 (PTLSDYIVPISVAILALLFAI), 176–196 (FFGPITAIWFIVMGLAGIMHI), 219–239 (GFLGVVVLGAVFLTVTGAEAL), 255–275 (WFVLVFPSLTLNYLGQGALVL), 293–313 (ALLPVVILATMATIIASQAVI), 345–365 (IFLPSVNAILFFGVIFLVLSF), 371–391 (LATAYGISVTGAMVVTSIMAF), 402–422 (LPMAIAVLTPLLLLEFVFLGA), and 427–447 (IHDGGYVPVLIATAFTVIMWT).

The protein belongs to the HAK/KUP transporter (TC 2.A.72) family.

The protein localises to the cell inner membrane. It carries out the reaction K(+)(in) + H(+)(in) = K(+)(out) + H(+)(out). Functionally, transport of potassium into the cell. Likely operates as a K(+):H(+) symporter. This chain is Probable potassium transport system protein Kup, found in Rhizobium rhizogenes (strain K84 / ATCC BAA-868) (Agrobacterium radiobacter).